The sequence spans 347 residues: Spermidine/putrescine import ATP-binding protein PotA (347 aa).

The 231-residue stretch at 6–236 folds into the ABC transporter domain; that stretch reads IEIKNVYKEF…PKNAFVAKFI (231 aa). 38 to 45 contacts ATP; sequence GPSGCGKT.

Belongs to the ABC transporter superfamily. Spermidine/putrescine importer (TC 3.A.1.11.1) family. The complex is composed of two ATP-binding proteins (PotA), two transmembrane proteins (PotB and PotC) and a solute-binding protein (PotD).

The protein localises to the cell membrane. The catalysed reaction is ATP + H2O + polyamine-[polyamine-binding protein]Side 1 = ADP + phosphate + polyamineSide 2 + [polyamine-binding protein]Side 1.. Its function is as follows. Part of the ABC transporter complex PotABCD involved in spermidine/putrescine import. Responsible for energy coupling to the transport system. The protein is Spermidine/putrescine import ATP-binding protein PotA of Clostridium novyi (strain NT).